The chain runs to 22 residues: Dioicin-1 (22 aa).

Its subcellular location is the secreted. It localises to the extracellular space. The protein resides in the golgi apparatus. It is found in the vacuole. It catalyses the reaction Endohydrolysis of the N-glycosidic bond at one specific adenosine on the 28S rRNA.. Its function is as follows. Nicks pBR322 dsDNA. Has adenine polynucleotide glycosidase activity on herring sperm ssDNA. The polypeptide is Dioicin-1 (Phytolacca dioica (Bella sombra tree)).